The sequence spans 229 residues: Cytidylate kinase (229 aa).

10 to 18 is an ATP binding site; that stretch reads GFSSCGKST.

The protein belongs to the cytidylate kinase family. Type 1 subfamily.

The protein localises to the cytoplasm. It carries out the reaction CMP + ATP = CDP + ADP. It catalyses the reaction dCMP + ATP = dCDP + ADP. This Bacteroides fragilis (strain ATCC 25285 / DSM 2151 / CCUG 4856 / JCM 11019 / LMG 10263 / NCTC 9343 / Onslow / VPI 2553 / EN-2) protein is Cytidylate kinase.